Reading from the N-terminus, the 101-residue chain is MKPNFSKGLLPAVVIEEDTKEVLMLAYMNEEAYEKTIETKRTWFYSRSRRSLWNKGETSGNVQHVQSLYLDCDQDSIVVVVKQVGPACHTGEKTCFHYKII.

Aspartate 71 serves as a coordination point for Mg(2+). Cysteine 72 serves as a coordination point for Zn(2+). The Mg(2+) site is built by aspartate 73 and aspartate 75. Zn(2+) contacts are provided by cysteine 88 and cysteine 95.

It belongs to the PRA-CH family. As to quaternary structure, homodimer. It depends on Mg(2+) as a cofactor. Zn(2+) is required as a cofactor.

It is found in the cytoplasm. The catalysed reaction is 1-(5-phospho-beta-D-ribosyl)-5'-AMP + H2O = 1-(5-phospho-beta-D-ribosyl)-5-[(5-phospho-beta-D-ribosylamino)methylideneamino]imidazole-4-carboxamide. Its pathway is amino-acid biosynthesis; L-histidine biosynthesis; L-histidine from 5-phospho-alpha-D-ribose 1-diphosphate: step 3/9. Functionally, catalyzes the hydrolysis of the adenine ring of phosphoribosyl-AMP. The sequence is that of Phosphoribosyl-AMP cyclohydrolase from Bacillus cereus (strain ATCC 10987 / NRS 248).